A 209-amino-acid chain; its full sequence is Uracil phosphoribosyltransferase (209 aa).

Residues Arg-79, Arg-104, and 131-139 contribute to the 5-phospho-alpha-D-ribose 1-diphosphate site; that span reads DPMLATGGS. Residues Ile-194 and 199-201 each bind uracil; that span reads GDA. A 5-phospho-alpha-D-ribose 1-diphosphate-binding site is contributed by Asp-200.

Belongs to the UPRTase family. Mg(2+) is required as a cofactor.

It carries out the reaction UMP + diphosphate = 5-phospho-alpha-D-ribose 1-diphosphate + uracil. It participates in pyrimidine metabolism; UMP biosynthesis via salvage pathway; UMP from uracil: step 1/1. Allosterically activated by GTP. Functionally, catalyzes the conversion of uracil and 5-phospho-alpha-D-ribose 1-diphosphate (PRPP) to UMP and diphosphate. The sequence is that of Uracil phosphoribosyltransferase from Streptococcus pneumoniae serotype 4 (strain ATCC BAA-334 / TIGR4).